The primary structure comprises 366 residues: MISSFHRPTVARVNLQAIKENVASVQKHIPLGVKTYAVVKADAYGHGAVQVSKALLPQVDGYCVSNLDEALQLRQAGIDKEILILGVLLPNELELAVANAITVTIASLDWIALARLEKKECQGLKVHVKVDSGMGRIGLRSSKEVNLLIDSLKELGADVEGIFTHFATADEADDTKFNQQLQFFKKLIAGLEDKPRLVHASNSATSIWHSDTIFNAVRLGIVSYGLNPSGSDLSLPFPLQEALSLESSLVHVKMISAGDTVGYGATYTAKKSEYVGTVPIGYADGWTRNMQGFSVLVDGQFCEIIGRVSMDQLTIRLSKAYPLGTKVTLIGSNQQKNISTTDIANYRNTINYEVLCLLSDRIPRIY.

The active-site Proton acceptor; specific for D-alanine is the Lys-40. Lys-40 carries the N6-(pyridoxal phosphate)lysine modification. Residue Arg-136 participates in substrate binding. Tyr-263 functions as the Proton acceptor; specific for L-alanine in the catalytic mechanism. Position 310 (Met-310) interacts with substrate.

It belongs to the alanine racemase family. Requires pyridoxal 5'-phosphate as cofactor.

The catalysed reaction is L-alanine = D-alanine. It participates in amino-acid biosynthesis; D-alanine biosynthesis; D-alanine from L-alanine: step 1/1. Its function is as follows. Catalyzes the interconversion of L-alanine and D-alanine. May also act on other amino acids. The chain is Alanine racemase (alr) from Streptococcus pyogenes serotype M5 (strain Manfredo).